The primary structure comprises 238 residues: 2-phytyl-1,4-naphtoquinone methyltransferase (238 aa).

This sequence belongs to the class I-like SAM-binding methyltransferase superfamily. MenG/UbiE family.

The enzyme catalyses demethylphylloquinol + S-adenosyl-L-methionine = phylloquinol + S-adenosyl-L-homocysteine + H(+). The protein operates within cofactor biosynthesis; phylloquinone biosynthesis. Methyltransferase required for the conversion of 2-phytyl-1,4-beta-naphthoquinol to phylloquinol. The polypeptide is 2-phytyl-1,4-naphtoquinone methyltransferase (Synechocystis sp. (strain ATCC 27184 / PCC 6803 / Kazusa)).